The chain runs to 543 residues: T-complex protein 1 subunit gamma (543 aa).

This sequence belongs to the TCP-1 chaperonin family.

It is found in the cytoplasm. Molecular chaperone; assists the folding of proteins upon ATP hydrolysis. Known to play a role, in vitro, in the folding of actin and tubulin. Plays a role in microtubule polymerization. This is T-complex protein 1 subunit gamma from Caenorhabditis elegans.